A 108-amino-acid polypeptide reads, in one-letter code: Phosphoribosyl-AMP cyclohydrolase (108 aa).

D78 contributes to the Mg(2+) binding site. C79 contacts Zn(2+). Residues D80 and D82 each coordinate Mg(2+). Zn(2+) contacts are provided by C95 and C102.

The protein belongs to the PRA-CH family. In terms of assembly, homodimer. Requires Mg(2+) as cofactor. Zn(2+) serves as cofactor.

The protein localises to the cytoplasm. The catalysed reaction is 1-(5-phospho-beta-D-ribosyl)-5'-AMP + H2O = 1-(5-phospho-beta-D-ribosyl)-5-[(5-phospho-beta-D-ribosylamino)methylideneamino]imidazole-4-carboxamide. Its pathway is amino-acid biosynthesis; L-histidine biosynthesis; L-histidine from 5-phospho-alpha-D-ribose 1-diphosphate: step 3/9. In terms of biological role, catalyzes the hydrolysis of the adenine ring of phosphoribosyl-AMP. This Nitrosopumilus maritimus (strain SCM1) protein is Phosphoribosyl-AMP cyclohydrolase.